A 110-amino-acid chain; its full sequence is Waprin-Thr1 (110 aa).

The first 20 residues, Met-1–Cys-20, serve as a signal peptide directing secretion. Residues Leu-22–Ser-68 form the WAP domain. 4 disulfides stabilise this stretch: Cys-29–Cys-55, Cys-38–Cys-59, Cys-42–Cys-54, and Cys-48–Cys-64.

The protein belongs to the venom waprin family. Cys-rich waprin subfamily. In terms of tissue distribution, expressed by the venom gland.

It localises to the secreted. Its function is as follows. Antimicrobial peptides with activity against Gram-positive and Gram-negative bacteria as well as fungi. Recognizes carbohydrates in the microbial cell walls, and induces structural damage to them. Also inhibits microbial serine proteases subtilisin A and proteinase K, as well as human and porcine elastases. Carbohydrates that are recognized are LPS, mannan, peptidoglycan, and N-acetl-D-glucosamine. In Apis mellifera (Honeybee), this protein is Waprin-Thr1.